We begin with the raw amino-acid sequence, 652 residues long: Probable endo-1,3(4)-beta-glucanase AFUB_029980 (652 aa).

A signal peptide spans 1-21 (MAPSSLLLSVGSLITSSLVSA). The region spanning 36 to 289 (ESWQGESFIN…WAGNVFAEST (254 aa)) is the GH16 domain. Residue Asn64 is glycosylated (N-linked (GlcNAc...) asparagine). Glu145 (nucleophile) is an active-site residue. Glu150 serves as the catalytic Proton donor. Residues Asn200 and Asn208 are each glycosylated (N-linked (GlcNAc...) asparagine). The interval 379-423 (NTVATSAADHATPSSAETTTVPAATGAPSVSATEGGDSELESTST) is disordered. Over residues 390–410 (TPSSAETTTVPAATGAPSVSA) the composition is skewed to polar residues. N-linked (GlcNAc...) asparagine glycosylation is present at Asn453. The disordered stretch occupies residues 509–551 (SEIPTAPPEPVSQAVSTGSFDDSDTAQGDSEEQGSIASASVAP). Residues 529-540 (DDSDTAQGDSEE) are compositionally biased toward acidic residues. Asn630 is lipidated: GPI-anchor amidated asparagine. Positions 631 to 652 (GANRMSVGLSGLIGVMFIAALA) are cleaved as a propeptide — removed in mature form.

It belongs to the glycosyl hydrolase 16 family.

The protein localises to the cell membrane. The catalysed reaction is Endohydrolysis of (1-&gt;3)- or (1-&gt;4)-linkages in beta-D-glucans when the glucose residue whose reducing group is involved in the linkage to be hydrolyzed is itself substituted at C-3.. Functionally, mixed-linked glucanase involved in the degradation of complex natural cellulosic substrates. This is Probable endo-1,3(4)-beta-glucanase AFUB_029980 from Aspergillus fumigatus (strain CBS 144.89 / FGSC A1163 / CEA10) (Neosartorya fumigata).